The primary structure comprises 164 residues: MDLTVFFLLIWPPYVANGSAVFASRLKWRHPVDFGRNFIDGRRIFGDGKTYEGVAIGIATGTVLGYFPNLVYHVIGVFDAFVLSASAVLGDLIGAFIKRRLCMPRGHPAFPLDQLDFLLTAFLVYSLFREIPVVYVLAAVVITPVIHRATNYVAYLLKLKKEPW.

The next 4 helical transmembrane spans lie at 3–23 (LTVFFLLIWPPYVANGSAVFA), 55–75 (AIGIATGTVLGYFPNLVYHVI), 77–97 (VFDAFVLSASAVLGDLIGAFI), and 122–142 (FLVYSLFREIPVVYVLAAVVI).

It belongs to the CDP-archaeol synthase family. Requires Mg(2+) as cofactor.

It is found in the cell membrane. The enzyme catalyses 2,3-bis-O-(geranylgeranyl)-sn-glycerol 1-phosphate + CTP + H(+) = CDP-2,3-bis-O-(geranylgeranyl)-sn-glycerol + diphosphate. It functions in the pathway membrane lipid metabolism; glycerophospholipid metabolism. Functionally, catalyzes the formation of CDP-2,3-bis-(O-geranylgeranyl)-sn-glycerol (CDP-archaeol) from 2,3-bis-(O-geranylgeranyl)-sn-glycerol 1-phosphate (DGGGP) and CTP. This reaction is the third ether-bond-formation step in the biosynthesis of archaeal membrane lipids. The protein is CDP-archaeol synthase of Pyrobaculum aerophilum (strain ATCC 51768 / DSM 7523 / JCM 9630 / CIP 104966 / NBRC 100827 / IM2).